The following is a 102-amino-acid chain: Small ribosomal subunit protein uS10 (102 aa).

The interval 33–59 (RMSGPIPLPTKRIRITTRKSPDGEGSA) is disordered.

The protein belongs to the universal ribosomal protein uS10 family. In terms of assembly, part of the 30S ribosomal subunit.

Its function is as follows. Involved in the binding of tRNA to the ribosomes. The chain is Small ribosomal subunit protein uS10 from Pyrococcus furiosus (strain ATCC 43587 / DSM 3638 / JCM 8422 / Vc1).